Consider the following 89-residue polypeptide: Small ribosomal subunit protein uS15 (89 aa).

The protein belongs to the universal ribosomal protein uS15 family. As to quaternary structure, part of the 30S ribosomal subunit. Forms a bridge to the 50S subunit in the 70S ribosome, contacting the 23S rRNA.

Its function is as follows. One of the primary rRNA binding proteins, it binds directly to 16S rRNA where it helps nucleate assembly of the platform of the 30S subunit by binding and bridging several RNA helices of the 16S rRNA. In terms of biological role, forms an intersubunit bridge (bridge B4) with the 23S rRNA of the 50S subunit in the ribosome. In Oenococcus oeni (strain ATCC BAA-331 / PSU-1), this protein is Small ribosomal subunit protein uS15.